The following is a 443-amino-acid chain: Thymidine phosphorylase (443 aa).

Belongs to the thymidine/pyrimidine-nucleoside phosphorylase family. As to quaternary structure, homodimer.

The enzyme catalyses thymidine + phosphate = 2-deoxy-alpha-D-ribose 1-phosphate + thymine. The protein operates within pyrimidine metabolism; dTMP biosynthesis via salvage pathway; dTMP from thymine: step 1/2. Its function is as follows. The enzymes which catalyze the reversible phosphorolysis of pyrimidine nucleosides are involved in the degradation of these compounds and in their utilization as carbon and energy sources, or in the rescue of pyrimidine bases for nucleotide synthesis. This chain is Thymidine phosphorylase, found in Shewanella amazonensis (strain ATCC BAA-1098 / SB2B).